Here is a 221-residue protein sequence, read N- to C-terminus: uncharacterized protein (221 aa).

The N-terminal stretch at 1–23 (MNKLIQLALFFTLMLTGCSNSST) is a signal peptide. Residues 67-221 (ELGKRKAKEE…QGYIDPEDAP (155 aa)) are disordered. Residues 68 to 150 (LGKRKAKEEA…EQKANAEKKR (83 aa)) are compositionally biased toward basic and acidic residues. Residues 70–161 (KRKAKEEAEK…SQAQRQQTEA (92 aa)) are a coiled coil. The span at 152–161 (SQAQRQQTEA) shows a compositional bias: polar residues. A compositionally biased stretch (low complexity) spans 162 to 174 (PSSNSQDPPSSSS). The span at 175 to 184 (QTDKTIQQPA) shows a compositional bias: polar residues. A compositionally biased stretch (basic and acidic residues) spans 195-205 (YEERKKWHDDQ).

This is an uncharacterized protein from Bacillus subtilis (strain 168).